Here is a 300-residue protein sequence, read N- to C-terminus: F-box/LRR-repeat protein 15 (300 aa).

Position 1 is an N-acetylmethionine (methionine 1). The region spanning 19 to 66 (FLDLPWEDVLLPHVLNRVPLRQLLRLQRVSRAFRSLVQLHLAGLRRFD) is the F-box domain. The interval 113 to 269 (NPQLRSVALG…ESSLSRLRKR (157 aa)) is interaction with SMURF1. LRR repeat units lie at residues 141–162 (RLQR…RGLA), 167–188 (ALEE…VYLA), 194–215 (GLRS…QELA), 220–241 (ELHH…RTLA), and 246–267 (VLRS…SRLR).

This sequence belongs to the FBXL15 family. In terms of assembly, part of the SCF (SKP1-CUL1-F-box) E3 ubiquitin-protein ligase complex SCF(FBXL15) composed of CUL1, SKP1, RBX1 and FBXL15.

The protein localises to the cytoplasm. It functions in the pathway protein modification; protein ubiquitination. Substrate recognition component of a SCF (SKP1-CUL1-F-box protein) E3 ubiquitin-protein ligase complex which mediates the ubiquitination and subsequent proteasomal degradation of SMURF1, thereby acting as a positive regulator of the BMP signaling pathway. Required for dorsal/ventral pattern formation and bone mass maintenance. Also mediates ubiquitination of SMURF2 and WWP2. This Homo sapiens (Human) protein is F-box/LRR-repeat protein 15 (FBXL15).